We begin with the raw amino-acid sequence, 198 residues long: tRNA (pseudouridine(54)-N(1))-methyltransferase (198 aa).

An S-adenosyl-L-methionine-binding site is contributed by Leu-128.

It belongs to the methyltransferase superfamily. TrmY family. In terms of assembly, homodimer.

The protein localises to the cytoplasm. The enzyme catalyses pseudouridine(54) in tRNA + S-adenosyl-L-methionine = N(1)-methylpseudouridine(54) in tRNA + S-adenosyl-L-homocysteine + H(+). Functionally, specifically catalyzes the N1-methylation of pseudouridine at position 54 (Psi54) in tRNAs. This is tRNA (pseudouridine(54)-N(1))-methyltransferase from Haloferax volcanii (strain ATCC 29605 / DSM 3757 / JCM 8879 / NBRC 14742 / NCIMB 2012 / VKM B-1768 / DS2) (Halobacterium volcanii).